Here is a 364-residue protein sequence, read N- to C-terminus: DNA replication and repair protein RecF (364 aa).

30–37 (GANGSGKT) contacts ATP.

The protein belongs to the RecF family.

The protein localises to the cytoplasm. The RecF protein is involved in DNA metabolism; it is required for DNA replication and normal SOS inducibility. RecF binds preferentially to single-stranded, linear DNA. It also seems to bind ATP. The chain is DNA replication and repair protein RecF from Sodalis glossinidius (strain morsitans).